The chain runs to 505 residues: 2,3-bisphosphoglycerate-independent phosphoglycerate mutase (505 aa).

Mn(2+) contacts are provided by Asp12 and Ser62. The active-site Phosphoserine intermediate is the Ser62. Residues His123, 153–154 (RD), Arg185, Arg191, 257–260 (RPDR), and Lys330 contribute to the substrate site. Mn(2+) contacts are provided by Asp397, His401, Asp438, His439, and His456.

The protein belongs to the BPG-independent phosphoglycerate mutase family. Monomer. It depends on Mn(2+) as a cofactor.

The enzyme catalyses (2R)-2-phosphoglycerate = (2R)-3-phosphoglycerate. It functions in the pathway carbohydrate degradation; glycolysis; pyruvate from D-glyceraldehyde 3-phosphate: step 3/5. Functionally, catalyzes the interconversion of 2-phosphoglycerate and 3-phosphoglycerate. The chain is 2,3-bisphosphoglycerate-independent phosphoglycerate mutase from Staphylococcus epidermidis (strain ATCC 35984 / DSM 28319 / BCRC 17069 / CCUG 31568 / BM 3577 / RP62A).